Reading from the N-terminus, the 713-residue chain is Glycine--tRNA ligase beta subunit (713 aa).

It belongs to the class-II aminoacyl-tRNA synthetase family. Tetramer of two alpha and two beta subunits.

The protein resides in the cytoplasm. It carries out the reaction tRNA(Gly) + glycine + ATP = glycyl-tRNA(Gly) + AMP + diphosphate. This chain is Glycine--tRNA ligase beta subunit, found in Picosynechococcus sp. (strain ATCC 27264 / PCC 7002 / PR-6) (Agmenellum quadruplicatum).